Reading from the N-terminus, the 492-residue chain is Peptidyl-prolyl cis-trans isomerase-like 4 (492 aa).

The 161-residue stretch at 1 to 161 folds into the PPIase cyclophilin-type domain; sequence MAVLLETTLG…QDIRINHTVI (161 aa). The segment at 167–188 is disordered; that stretch reads DDPPDLLIPDRSPEPTREQLDS. Positions 177 to 187 are enriched in basic and acidic residues; the sequence is RSPEPTREQLD. Phosphoserine is present on serine 178. Threonine 182 carries the phosphothreonine modification. Glycyl lysine isopeptide (Lys-Gly) (interchain with G-Cter in SUMO2) cross-links involve residues lysine 201, lysine 212, and lysine 218. One can recognise an RRM domain in the interval 240–318; the sequence is NVLFVCKLNP…RRIHVDFSQS (79 aa). Glycyl lysine isopeptide (Lys-Gly) (interchain with G-Cter in SUMO2) cross-links involve residues lysine 321 and lysine 362. Disordered regions lie at residues 368-406 and 423-492; these read DEQA…PIKN and EESC…SKYR. The span at 377 to 390 shows a compositional bias: basic residues; the sequence is SHSHTSKKHKKKTH. A Phosphoserine modification is found at serine 393. Residue lysine 405 forms a Glycyl lysine isopeptide (Lys-Gly) (interchain with G-Cter in SUMO2) linkage. The segment covering 426–452 has biased composition (basic and acidic residues); the sequence is CWEKQKSEKRDRTQNRSRSRSRERDGH. Lysine 460 is covalently cross-linked (Glycyl lysine isopeptide (Lys-Gly) (interchain with G-Cter in SUMO2)). The residue at position 471 (serine 471) is a Phosphoserine. A compositionally biased stretch (basic and acidic residues) spans 482–492; the sequence is KSKDKEKSKYR.

Belongs to the cyclophilin-type PPIase family. PPIL4 subfamily. Abundantly expressed in kidney but has a ubiquitously low expression pattern in other adult tissues.

The protein resides in the nucleus. It carries out the reaction [protein]-peptidylproline (omega=180) = [protein]-peptidylproline (omega=0). Functionally, PPIases accelerate the folding of proteins. It catalyzes the cis-trans isomerization of proline imidic peptide bonds in oligopeptides. The sequence is that of Peptidyl-prolyl cis-trans isomerase-like 4 (PPIL4) from Homo sapiens (Human).